Here is a 123-residue protein sequence, read N- to C-terminus: Small ribosomal subunit protein uS12c (123 aa).

Belongs to the universal ribosomal protein uS12 family. In terms of assembly, part of the 30S ribosomal subunit.

It localises to the plastid. The protein localises to the chloroplast. Functionally, with S4 and S5 plays an important role in translational accuracy. Located at the interface of the 30S and 50S subunits. In Chlorokybus atmophyticus (Soil alga), this protein is Small ribosomal subunit protein uS12c (rps12).